The following is a 311-amino-acid chain: p-hydroxybenzoic acid efflux pump subunit AaeA (311 aa).

The chain crosses the membrane as a helical span at residues 11-31 (VGITVLVVVLAVIAIFNVWAF).

The protein belongs to the membrane fusion protein (MFP) (TC 8.A.1) family.

It is found in the cell inner membrane. In terms of biological role, forms an efflux pump with AaeB. The chain is p-hydroxybenzoic acid efflux pump subunit AaeA from Yersinia pseudotuberculosis serotype O:1b (strain IP 31758).